A 349-amino-acid chain; its full sequence is Glycerol-3-phosphate dehydrogenase [NAD(+)], cytoplasmic (349 aa).

NAD(+)-binding positions include 10-15 (GSGDWG), Lys120, and Ala153. Lys120 contributes to the substrate binding site. Ser154 is subject to Phosphoserine. The active-site Proton acceptor is the Lys204. Residue Arg269 coordinates NAD(+). 269–270 (RN) provides a ligand contact to substrate. The residue at position 289 (Lys289) is an N6-succinyllysine. NAD(+) contacts are provided by Lys296 and Gln298. Tyr326 carries the phosphotyrosine modification.

It belongs to the NAD-dependent glycerol-3-phosphate dehydrogenase family. In terms of assembly, homodimer.

Its subcellular location is the cytoplasm. The enzyme catalyses sn-glycerol 3-phosphate + NAD(+) = dihydroxyacetone phosphate + NADH + H(+). Has glycerol-3-phosphate dehydrogenase activity. This is Glycerol-3-phosphate dehydrogenase [NAD(+)], cytoplasmic (GPD1) from Oryctolagus cuniculus (Rabbit).